Here is a 314-residue protein sequence, read N- to C-terminus: tRNA dimethylallyltransferase (314 aa).

Residue 12–19 (GPTGTGKS) coordinates ATP. 14–19 (TGTGKS) is a substrate binding site.

It belongs to the IPP transferase family. As to quaternary structure, monomer. The cofactor is Mg(2+).

It catalyses the reaction adenosine(37) in tRNA + dimethylallyl diphosphate = N(6)-dimethylallyladenosine(37) in tRNA + diphosphate. Its function is as follows. Catalyzes the transfer of a dimethylallyl group onto the adenine at position 37 in tRNAs that read codons beginning with uridine, leading to the formation of N6-(dimethylallyl)adenosine (i(6)A). This is tRNA dimethylallyltransferase from Mycolicibacterium paratuberculosis (strain ATCC BAA-968 / K-10) (Mycobacterium paratuberculosis).